The sequence spans 404 residues: Protrudin (404 aa).

The interval 1-25 (MQSSDRDLSGPEASPSVMPEVLSEC) is disordered. The Cytoplasmic segment spans residues 1–63 (MQSSDRDLSG…LKDAGDGVRY (63 aa)). The sufficient for homooligomerization stretch occupies residues 1-92 (MQSSDRDLSG…LFLTLNEGAW (92 aa)). The sufficient for localization to endoplasmic reticulum tubular network and for interactions with REEP1, REEP5, ATL1, ATL2, ATL3 and SPAST stretch occupies residues 1–205 (MQSSDRDLSG…LYLLPLCWVL (205 aa)). Positions 51–64 (LEPLKDAGDGVRYL) are necessary for interaction with RAB11A and function in neurite outgrowth. A helical membrane pass occupies residues 64–85 (LLRWQMPLCSLLTCLGLNILFL). Over 86–90 (TLNEG) the chain is Lumenal. The chain crosses the membrane as a helical span at residues 91 to 109 (AWYSVGALIISVPALLGYL). Topologically, residues 110–187 (QEVCRAQLPE…NPVVSSQFYG (78 aa)) are cytoplasmic. The helical intramembrane region spans 188–208 (ALLGMVCMLYLLPLCWVLALL). Residues 209–404 (NSTLFLGNGE…CASCNQTLSK (196 aa)) are Cytoplasmic-facing. Residues 259-299 (DSTPAPTPTEDLTPGSVEEAEEAEPDEEFKDAIEEDDEGTP) are disordered. Positions 271–354 (TPGSVEEAEE…GCAATFSVLK (84 aa)) are necessary for interaction with KIF5A. Positions 276–299 (EEAEEAEPDEEFKDAIEEDDEGTP) are enriched in acidic residues. Residues 286–292 (EFKDAIE) form a necessary for interaction with VAPA region. Residues 337–403 (TNNFGNCAGC…VCASCNQTLS (67 aa)) form an FYVE-type zinc finger. 8 residues coordinate Zn(2+): Cys-343, Cys-346, Cys-359, Cys-362, Cys-367, Cys-370, Cys-395, and Cys-398.

In terms of assembly, can form homooligomers (monomers, dimers and tetramers). Interacts with FKBP8; may negatively regulate ZFYVE27 phosphorylation. Interacts with VAPA (via MSP domain); may regulate ZFYVE27 retention in the endoplasmic reticulum and its function in cell projections formation. Interacts with VAPB (via MSP domain). Interacts with RAB11A (GDP-bound form); regulates RAB11A. Interacts with RAB11B (GDP-bound form), REEP1, REEP5, ATL1, ATL2, ATL3, SPAST, SURF4, KIF5A, KIF5B, KIF5C and RTN3. Post-translationally, phosphorylated. Phosphorylation is induced by NGF through the MAPK/ERK pathway and modulates interaction with RAB11A.

The protein resides in the recycling endosome membrane. It localises to the endoplasmic reticulum membrane. It is found in the cell projection. The protein localises to the growth cone membrane. Its function is as follows. Key regulator of RAB11-dependent vesicular trafficking during neurite extension through polarized membrane transport. Promotes axonal elongation and contributes to the establishment of neuronal cell polarity. Involved in nerve growth factor-induced neurite formation in VAPA-dependent manner. Contributes to both the formation and stabilization of the tubular ER network. Involved in ER morphogenesis by regulating the sheet-to-tubule balance and possibly the density of tubule interconnections. Acts as an adapter protein that facilitates the interaction of KIF5A with VAPA, VAPB, SURF4, RAB11A, RAB11B and RTN3 and the ZFYVE27-KIF5A complex contributes to the transport of these proteins in neurons. Can induce formation of neurite-like membrane protrusions in non-neuronal cells in a KIF5A/B-dependent manner. The polypeptide is Protrudin (Zfyve27) (Rattus norvegicus (Rat)).